Here is a 474-residue protein sequence, read N- to C-terminus: L-arabinose isomerase (474 aa).

Positions 306, 331, 348, and 447 each coordinate Mn(2+).

The protein belongs to the arabinose isomerase family. The cofactor is Mn(2+).

The enzyme catalyses beta-L-arabinopyranose = L-ribulose. The protein operates within carbohydrate degradation; L-arabinose degradation via L-ribulose; D-xylulose 5-phosphate from L-arabinose (bacterial route): step 1/3. Its function is as follows. Catalyzes the conversion of L-arabinose to L-ribulose. The polypeptide is L-arabinose isomerase (Pediococcus pentosaceus (strain ATCC 25745 / CCUG 21536 / LMG 10740 / 183-1w)).